The chain runs to 257 residues: Homeobox protein goosecoid (257 aa).

Residues 160–219 (KRRHRTIFTDEQLEALENLFQETKYPDVGTREQLARKVHLREEKVEVWFKNRRAKWRRQK) constitute a DNA-binding region (homeobox). The segment at 213–257 (AKWRRQKRSSSEESENAEKWNKTSSSKASPEKREEEGKSDLDSDS) is disordered. Residues 241–257 (SPEKREEEGKSDLDSDS) are compositionally biased toward basic and acidic residues.

It belongs to the paired homeobox family. Bicoid subfamily.

Its subcellular location is the nucleus. In terms of biological role, regulates chordin (CHRD). May play a role in spatial programing within discrete embryonic fields or lineage compartments during organogenesis. In concert with NKX3-2, plays a role in defining the structural components of the middle ear; required for the development of the entire tympanic ring. Probably involved in the regulatory networks that define neural crest cell fate specification and determine mesoderm cell lineages in mammals. The polypeptide is Homeobox protein goosecoid (GSC) (Homo sapiens (Human)).